Consider the following 302-residue polypeptide: Nucleotide-binding protein Bamb_2855 (302 aa).

Position 8–15 (8–15 (GISGSGKS)) interacts with ATP. A GTP-binding site is contributed by 57 to 60 (DARS).

The protein belongs to the RapZ-like family.

Displays ATPase and GTPase activities. The protein is Nucleotide-binding protein Bamb_2855 of Burkholderia ambifaria (strain ATCC BAA-244 / DSM 16087 / CCUG 44356 / LMG 19182 / AMMD) (Burkholderia cepacia (strain AMMD)).